The chain runs to 979 residues: Translation initiation factor IF-2 (979 aa).

Residues 33 to 391 (VKSHSSTITT…TPPAEITLTE (359 aa)) are disordered. 2 stretches are compositionally biased toward low complexity: residues 54–63 (QKRPQAPKAQ) and 139–150 (AKTTSPKAEPAA). Positions 151–166 (PAAPKPKLMGPPPRPT) are enriched in pro residues. Acidic residues predominate over residues 234 to 252 (PELDEEPDTNNVEGDDDAT). Composition is skewed to basic residues over residues 263–278 (PAAKPKKAIGPKPSKR) and 294–303 (TKTSKLKRRP). The segment covering 314 to 328 (GTTTNNNAEVPSVSL) has biased composition (polar residues). Basic and acidic residues predominate over residues 371–380 (KEQRRDRPDV). Residues 468–641 (HRPPVVTIMG…LLVSEIEELS (174 aa)) enclose the tr-type G domain. The segment at 477–484 (GHVDHGKT) is G1. 477–484 (GHVDHGKT) provides a ligand contact to GTP. Residues 502-506 (GITQH) form a G2 region. Positions 527 to 530 (DTPG) are G3. GTP-binding positions include 527–531 (DTPGH) and 581–584 (NKMD). Residues 581 to 584 (NKMD) form a G4 region. Residues 617–619 (SAL) are G5.

This sequence belongs to the TRAFAC class translation factor GTPase superfamily. Classic translation factor GTPase family. IF-2 subfamily.

It is found in the cytoplasm. Its function is as follows. One of the essential components for the initiation of protein synthesis. Protects formylmethionyl-tRNA from spontaneous hydrolysis and promotes its binding to the 30S ribosomal subunits. Also involved in the hydrolysis of GTP during the formation of the 70S ribosomal complex. The protein is Translation initiation factor IF-2 of Picosynechococcus sp. (strain ATCC 27264 / PCC 7002 / PR-6) (Agmenellum quadruplicatum).